Reading from the N-terminus, the 364-residue chain is Peptide chain release factor 2 (364 aa).

Gln251 is modified (N5-methylglutamine).

It belongs to the prokaryotic/mitochondrial release factor family. Post-translationally, methylated by PrmC. Methylation increases the termination efficiency of RF2.

It is found in the cytoplasm. Functionally, peptide chain release factor 2 directs the termination of translation in response to the peptide chain termination codons UGA and UAA. The chain is Peptide chain release factor 2 (prfB) from Buchnera aphidicola subsp. Schizaphis graminum (strain Sg).